Reading from the N-terminus, the 197-residue chain is MAASPKINRREHILQCLATMLETSPGQRITTAKLAAEVGVSEAALYRHFPSKARMFEGLIEFIEESLLSRINLIMDEEKDTMKRCQQLLQLLLVFAERNPGISRVLNGDALLGENERLRSRISQLFAKIETHLKQILREKSLREGKGFNLDEAVLANLLLAVAEGRIAQFVRSEFKLKPTKHFNEQWTFIQQQLLQS.

The region spanning 7-67 (INRREHILQC…GLIEFIEESL (61 aa)) is the HTH tetR-type domain. The H-T-H motif DNA-binding region spans 30 to 49 (TTAKLAAEVGVSEAALYRHF). Residues 109-136 (DALLGENERLRSRISQLFAKIETHLKQI) are a coiled coil.

This sequence belongs to the nucleoid occlusion factor SlmA family. As to quaternary structure, homodimer. Interacts with FtsZ.

It localises to the cytoplasm. The protein resides in the nucleoid. In terms of biological role, required for nucleoid occlusion (NO) phenomenon, which prevents Z-ring formation and cell division over the nucleoid. Acts as a DNA-associated cell division inhibitor that binds simultaneously chromosomal DNA and FtsZ, and disrupts the assembly of FtsZ polymers. SlmA-DNA-binding sequences (SBS) are dispersed on non-Ter regions of the chromosome, preventing FtsZ polymerization at these regions. The sequence is that of Nucleoid occlusion factor SlmA from Shewanella halifaxensis (strain HAW-EB4).